Here is a 379-residue protein sequence, read N- to C-terminus: MIENFISDPHNVKFVENFFNSELFSSLSTDYPIVMISDHYVAEELLPPILDFMDNLGYRVILLTFPPGEKNKTWETFISLQNQLIDQGVSLGSTIIGIGGGIILDMAGFLASTYCRGVPLFLIPTTLTAMIDASIGGKNGINLRGFKNRLGTFYPPKDVWICPEFLATLPKKEWLHGIPEAIKHGCIADAYIWEFLDNCRDRLFSSQEILHEFIKRNCMVKAAIVAKDPKDQNLRKTLNFGHTIAHAIETLSKGHISHGLAVSVGMMIEMRISLESGIMKNPYLIEQLDNLLKYFCLPTALQELGSLIPQHLHNEFYHPENILHTLGYDKKNLSKKAVRMVMVEHLGRAASCNGAYCATPHTDILYEVLKSECHVVCNN.

NAD(+) contacts are provided by residues 67–72 (PGEKNK), 101–105 (GIILD), 125–126 (TT), K138, and K147. Zn(2+) is bound by residues E180, H242, and H258.

Belongs to the sugar phosphate cyclases superfamily. Dehydroquinate synthase family. The cofactor is NAD(+). Requires Co(2+) as cofactor. Zn(2+) serves as cofactor.

The protein resides in the cytoplasm. It catalyses the reaction 7-phospho-2-dehydro-3-deoxy-D-arabino-heptonate = 3-dehydroquinate + phosphate. It participates in metabolic intermediate biosynthesis; chorismate biosynthesis; chorismate from D-erythrose 4-phosphate and phosphoenolpyruvate: step 2/7. Catalyzes the conversion of 3-deoxy-D-arabino-heptulosonate 7-phosphate (DAHP) to dehydroquinate (DHQ). The chain is 3-dehydroquinate synthase from Chlamydia caviae (strain ATCC VR-813 / DSM 19441 / 03DC25 / GPIC) (Chlamydophila caviae).